The primary structure comprises 109 residues: Short-chain dehydrogenase/reductase homolog YusS (109 aa).

The protein belongs to the short-chain dehydrogenases/reductases (SDR) family.

The chain is Short-chain dehydrogenase/reductase homolog YusS (yusS) from Bacillus subtilis (strain 168).